We begin with the raw amino-acid sequence, 512 residues long: Mucin-13 (512 aa).

Residues 1-18 (MKAIIHLTLLALLSVNTA) form the signal peptide. Residues 19-421 (TNQGNSADAV…GLDCKDKFQL (403 aa)) lie on the Extracellular side of the membrane. The span at 22 to 38 (GNSADAVTTTETATSGP) shows a compositional bias: polar residues. 2 disordered regions span residues 22–67 (GNSA…PTAT) and 133–176 (MVPS…PSNP). Residues 53–67 (TASTTANTPSFPTAT) show a composition bias toward low complexity. Polar residues predominate over residues 135 to 176 (PSETQSNNEMSPTTEDNQSSGPPTGTALLETSTLNSTGPSNP). N-linked (GlcNAc...) asparagine glycans are attached at residues Asn-151 and Asn-169. The EGF-like 1 domain maps to 173–211 (PSNPCQDDPCADNSLCVKLHNTSFCLCLEGYYYNSSTCK). Cystine bridges form between Cys-177/Cys-188, Cys-182/Cys-197, and Cys-199/Cys-210. N-linked (GlcNAc...) asparagine glycans are attached at residues Asn-193, Asn-206, Asn-284, and Asn-332. Residues 212 to 336 (KGKVFPGKIS…DYYGCNQTAD (125 aa)) form the SEA domain. EGF-like domains follow at residues 322–361 (LTLR…PFCV) and 363–404 (SSLK…GNCQ). 6 cysteine pairs are disulfide-bonded: Cys-326-Cys-338, Cys-331-Cys-344, Cys-346-Cys-360, Cys-367-Cys-378, Cys-371-Cys-389, and Cys-391-Cys-403. Residues 422 to 442 (ILTIVGTIAGIVILSMIIALI) traverse the membrane as a helical segment. Topologically, residues 443-512 (VTARSNNKTK…RHSSMPRPDY (70 aa)) are cytoplasmic. Residues 493-505 (RDSQMQNPYSRHS) are compositionally biased toward polar residues. Positions 493 to 512 (RDSQMQNPYSRHSSMPRPDY) are disordered.

As to quaternary structure, homodimer of beta subunits. Cleaved into two subunits, alpha and beta, probably between the first EGF domain and the SEA domain. Beta subunit contains the cytoplasmic tail and alpha subunit the extracellular tail. The homooligomerization into dimers is dependent on intrachain disulfide bonds. Post-translationally, highly N-glycosylated. In terms of tissue distribution, highly expressed in epithelial tissues, particularly those of the gastrointestinal and respiratory tracts, such as large intestine and trachea, followed by kidney, small intestine, appendix and stomach.

Its subcellular location is the cell membrane. The protein resides in the apical cell membrane. It localises to the secreted. Its function is as follows. Epithelial and hemopoietic transmembrane mucin that may play a role in cell signaling. This chain is Mucin-13 (MUC13), found in Homo sapiens (Human).